A 208-amino-acid polypeptide reads, in one-letter code: FMN-dependent NADH:quinone oxidoreductase (208 aa).

FMN contacts are provided by residues 17–19, 99–102, and 143–146; these read SNS, MWNL, and SRGG.

It belongs to the azoreductase type 1 family. Homodimer. It depends on FMN as a cofactor.

The enzyme catalyses 2 a quinone + NADH + H(+) = 2 a 1,4-benzosemiquinone + NAD(+). It catalyses the reaction N,N-dimethyl-1,4-phenylenediamine + anthranilate + 2 NAD(+) = 2-(4-dimethylaminophenyl)diazenylbenzoate + 2 NADH + 2 H(+). Quinone reductase that provides resistance to thiol-specific stress caused by electrophilic quinones. Functionally, also exhibits azoreductase activity. Catalyzes the reductive cleavage of the azo bond in aromatic azo compounds to the corresponding amines. The protein is FMN-dependent NADH:quinone oxidoreductase of Staphylococcus aureus (strain COL).